A 94-amino-acid chain; its full sequence is Integration host factor subunit beta (94 aa).

This sequence belongs to the bacterial histone-like protein family. As to quaternary structure, heterodimer of an alpha and a beta chain.

Functionally, this protein is one of the two subunits of integration host factor, a specific DNA-binding protein that functions in genetic recombination as well as in transcriptional and translational control. This is Integration host factor subunit beta from Escherichia coli O127:H6 (strain E2348/69 / EPEC).